The chain runs to 216 residues: 3-isopropylmalate dehydratase small subunit (216 aa).

It belongs to the LeuD family. LeuD type 1 subfamily. As to quaternary structure, heterodimer of LeuC and LeuD.

It carries out the reaction (2R,3S)-3-isopropylmalate = (2S)-2-isopropylmalate. The protein operates within amino-acid biosynthesis; L-leucine biosynthesis; L-leucine from 3-methyl-2-oxobutanoate: step 2/4. Functionally, catalyzes the isomerization between 2-isopropylmalate and 3-isopropylmalate, via the formation of 2-isopropylmaleate. This chain is 3-isopropylmalate dehydratase small subunit, found in Marinomonas sp. (strain MWYL1).